Here is a 361-residue protein sequence, read N- to C-terminus: Peptide chain release factor 1 (361 aa).

N5-methylglutamine is present on glutamine 233. Over residues 280–293 (ERRKKEQERADSRR) the composition is skewed to basic and acidic residues. The tract at residues 280–307 (ERRKKEQERADSRRGQVGSGDRSERIRT) is disordered.

It belongs to the prokaryotic/mitochondrial release factor family. In terms of processing, methylated by PrmC. Methylation increases the termination efficiency of RF1.

It is found in the cytoplasm. Its function is as follows. Peptide chain release factor 1 directs the termination of translation in response to the peptide chain termination codons UAG and UAA. In Rickettsia massiliae (strain Mtu5), this protein is Peptide chain release factor 1.